Reading from the N-terminus, the 962-residue chain is Translation initiation factor IF-2 (962 aa).

The tract at residues 101–366 is disordered; sequence AAQTQAAPVR…KKGKKLKLEP (266 aa). The span at 117-141 shows a compositional bias: basic and acidic residues; the sequence is DAAKARAEAATRAEARAKAEAEAAK. The span at 145-157 shows a compositional bias: low complexity; it reads AKAGNKAKPAAQK. A compositionally biased stretch (basic and acidic residues) spans 173–216; that stretch reads KPAEESKAEKAQADKMPSKKPAEPKEKAAKPKHERNGKGKDAKK. The segment covering 219–234 has biased composition (low complexity); sequence KPAAPAVPQPVVSAEE. The segment covering 235 to 269 has biased composition (basic and acidic residues); the sequence is QAQRDEEARRAAALRAHQEALLKEKQERQARREAM. A compositionally biased stretch (low complexity) spans 270-283; it reads KQQAEQQAKAAQEA. A compositionally biased stretch (basic and acidic residues) spans 338–354; sequence GGRDRNNARNGDDERVR. Residues 462 to 631 form the tr-type G domain; sequence PRPPVVTVMG…LLEAEVLELT (170 aa). The tract at residues 471–478 is G1; it reads GHVDHGKT. 471-478 provides a ligand contact to GTP; the sequence is GHVDHGKT. The tract at residues 496–500 is G2; sequence GITQH. Residues 517 to 520 are G3; it reads DTPG. Residues 517 to 521 and 571 to 574 each bind GTP; these read DTPGH and NKID. The tract at residues 571-574 is G4; the sequence is NKID. The G5 stretch occupies residues 607–609; it reads SAK.

This sequence belongs to the TRAFAC class translation factor GTPase superfamily. Classic translation factor GTPase family. IF-2 subfamily.

It is found in the cytoplasm. In terms of biological role, one of the essential components for the initiation of protein synthesis. Protects formylmethionyl-tRNA from spontaneous hydrolysis and promotes its binding to the 30S ribosomal subunits. Also involved in the hydrolysis of GTP during the formation of the 70S ribosomal complex. This Neisseria meningitidis serogroup A / serotype 4A (strain DSM 15465 / Z2491) protein is Translation initiation factor IF-2.